A 1050-amino-acid chain; its full sequence is Nuclear pore complex-interacting protein family member B3 (1050 aa).

The helical transmembrane segment at 63–87 threads the bilayer; it reads VIIAFPTSYKVVITLWIVYLWVSLL. 3 disordered regions span residues 241-262, 290-574, and 785-1050; these read NRMGHQPPPPTQQHSITDNSLS, LTPL…NIKT, and ERLR…RRLS. Residues 252–262 are compositionally biased toward polar residues; it reads QQHSITDNSLS. Residues 349 to 359 are compositionally biased toward pro residues; sequence PLPPSALPSAP. Basic and acidic residues-rich tracts occupy residues 406 to 416, 448 to 458, 490 to 500, 528 to 538, 820 to 830, 862 to 872, and 904 to 914; these read DNIKTPAERLR.

Belongs to the NPIP family.

It localises to the membrane. This Homo sapiens (Human) protein is Nuclear pore complex-interacting protein family member B3 (NPIPB3).